Reading from the N-terminus, the 122-residue chain is Large ribosomal subunit protein uL14 (122 aa).

This sequence belongs to the universal ribosomal protein uL14 family. Part of the 50S ribosomal subunit. Forms a cluster with proteins L3 and L19. In the 70S ribosome, L14 and L19 interact and together make contacts with the 16S rRNA in bridges B5 and B8.

Functionally, binds to 23S rRNA. Forms part of two intersubunit bridges in the 70S ribosome. This Rubrobacter xylanophilus (strain DSM 9941 / JCM 11954 / NBRC 16129 / PRD-1) protein is Large ribosomal subunit protein uL14.